Reading from the N-terminus, the 70-residue chain is Envelope small membrane protein (70 aa).

A lipid anchor (N-myristoyl glycine; by host) is attached at Gly-2. Residues 2 to 15 are endoplasmic reticulum retention signal; the sequence is GSLWSKISQLFVDA. Topologically, residues 2–25 are virion surface; that stretch reads GSLWSKISQLFVDAFTEFLVSVVD. The chain crosses the membrane as a helical span at residues 26–46; that stretch reads IVIFLAILFGFTVAGWLLVFL. Topologically, residues 47–70 are intravirion; it reads LRVVCSALLRSRSAIHSPELSKVL.

Belongs to the arteriviridae E protein family. In terms of assembly, homooligomer. Associates with itself into higher-order structures, including dimers, trimers and tetramers. Associates with the GP2b-GP3-GP4 complex. Post-translationally, myristoylated. Not glycosylated.

The protein localises to the virion membrane. Its subcellular location is the host endoplasmic reticulum membrane. The protein resides in the host Golgi apparatus membrane. It localises to the secreted. Functionally, minor envelope protein. May function as a viroporin in the virion envelope that facilitates uncoating of the virus in order to release the genomic RNA into the cytoplasm for subsequent replication. The sequence is that of Envelope small membrane protein (GP2b) from Sus scrofa (Pig).